The sequence spans 595 residues: Tumor necrosis factor receptor superfamily member 8 (595 aa).

The first 18 residues, 1-18 (MRVLLAALGLLFLGALRA), serve as a signal peptide directing secretion. At 19–385 (FPQDRPFEDT…STGKPVLDAG (367 aa)) the chain is on the extracellular side. TNFR-Cys repeat units lie at residues 28 to 66 (TCHGNPSHYYDKAVRRCCYRCPMGLFPTQQCPQRPTDCR), 68 to 106 (QCEPDYYLDEADRCTACVTCSRDDLVEKTPCAWNSSRVC), and 107 to 150 (ECRP…TVCE). Intrachain disulfides connect C29-C44, C45-C58, C48-C65, C69-C81, C84-C98, C87-C106, C108-C122, and C131-C149. Residue N32 is glycosylated (N-linked (GlcNAc...) asparagine). Residue N101 is glycosylated (N-linked (GlcNAc...) asparagine). Positions 167 to 238 (KEPSSGTIPQ…PTQPCPEGSG (72 aa)) are disordered. The segment covering 179–194 (PTPVSPATSSASTMPV) has biased composition (low complexity). TNFR-Cys repeat units follow at residues 205-241 (ASKLTRAPDSPSSVGRPSSDPGLSPTQPCPEGSGDCR), 243-281 (QCEPDYYLDEAGRCTACVSCSRDDLVEKTPCAWNSSRTC), and 282-325 (ECRP…TTFE). Intrachain disulfides connect C233–C240, C244–C256, C259–C273, C262–C281, C283–C297, and C289–C300. N276 carries an N-linked (GlcNAc...) asparagine glycan. Positions 323–355 (TFEAPPLGTQPDCNPTPENGEAPASTSPTQSLL) are disordered. N336 is a glycosylation site (N-linked (GlcNAc...) asparagine). The segment covering 346–355 (ASTSPTQSLL) has biased composition (polar residues). Residues 386–406 (PVLFWVILVLVVVVGSSAFLL) traverse the membrane as a helical segment. Residues 407 to 595 (CHRRACRKRI…DPLPTAASGK (189 aa)) lie on the Cytoplasmic side of the membrane. Phosphoserine occurs at positions 438 and 452. Disordered stretches follow at residues 438–457 (SRPRRSSTQLRSGASVTEPV), 485–509 (LQDASPAGGPSSPRDLPEPRVSTEH), and 536–595 (EGRG…ASGK). Positions 443 to 452 (SSTQLRSGAS) are enriched in polar residues. Residues 499 to 509 (DLPEPRVSTEH) are compositionally biased toward basic and acidic residues.

The protein belongs to the TNFR8 family. Interacts with TRAF1, TRAF2, TRAF3 and TRAF5. Post-translationally, phosphorylated on serine and tyrosine residues. Isoform 2 is constitutively phosphorylated. As to expression, detected in alveolar macrophages (at protein level).

It is found in the cell membrane. It localises to the cytoplasm. Functionally, receptor for TNFSF8/CD30L. May play a role in the regulation of cellular growth and transformation of activated lymphoblasts. Regulates gene expression through activation of NF-kappa-B. The chain is Tumor necrosis factor receptor superfamily member 8 from Homo sapiens (Human).